The sequence spans 236 residues: Small ribosomal subunit protein uS2c (236 aa).

Belongs to the universal ribosomal protein uS2 family.

Its subcellular location is the plastid. The protein resides in the chloroplast. This is Small ribosomal subunit protein uS2c (rps2) from Lolium perenne (Perennial ryegrass).